The primary structure comprises 111 residues: Cytochrome c (111 aa).

Ala1 is subject to N-acetylalanine. Heme c is bound by residues Cys22, Cys25, and His26. N6,N6,N6-trimethyllysine is present on Lys80. Residue Met88 coordinates heme c. Lys94 carries the N6,N6,N6-trimethyllysine modification.

This sequence belongs to the cytochrome c family. Post-translationally, binds 1 heme c group covalently per subunit.

The protein localises to the mitochondrion intermembrane space. Electron carrier protein. The oxidized form of the cytochrome c heme group can accept an electron from the heme group of the cytochrome c1 subunit of cytochrome reductase. Cytochrome c then transfers this electron to the cytochrome oxidase complex, the final protein carrier in the mitochondrial electron-transport chain. This is Cytochrome c from Gossypium barbadense (Sea Island cotton).